The sequence spans 779 residues: Acyl-CoA dehydrogenase family member 11 (779 aa).

Lys-175 bears the N6-acetyllysine mark. Position 210 is a phosphoserine (Ser-210). At Tyr-323 the chain carries Phosphotyrosine. N6-succinyllysine occurs at positions 368 and 390. Residues 503–513 (FCMTEPNVSSS), 511–513 (SSS), 537–539 (WSS), and Ser-539 each bind FAD. Ser-513 is a substrate binding site. 628–631 (GPGR) is a substrate binding site. FAD is bound by residues Arg-656, Gln-726, and 726 to 730 (QVHGG). Residue Gly-754 coordinates substrate. Residues 755 to 757 (PDE) and Glu-757 each bind FAD. N6-acetyllysine is present on Lys-765.

Belongs to the acyl-CoA dehydrogenase family. Homodimer. Requires FAD as cofactor.

The protein localises to the peroxisome. Its subcellular location is the mitochondrion membrane. The enzyme catalyses a 2,3-saturated acyl-CoA + oxidized [electron-transfer flavoprotein] + H(+) = a (2E)-enoyl-CoA + reduced [electron-transfer flavoprotein]. It carries out the reaction docosanoyl-CoA + oxidized [electron-transfer flavoprotein] + H(+) = (2E)-docosenoyl-CoA + reduced [electron-transfer flavoprotein]. It catalyses the reaction tetracosanoyl-CoA + oxidized [electron-transfer flavoprotein] + H(+) = (2E)-tetracosenoyl-CoA + reduced [electron-transfer flavoprotein]. The catalysed reaction is eicosanoyl-CoA + oxidized [electron-transfer flavoprotein] + H(+) = (2E)-eicosenoyl-CoA + reduced [electron-transfer flavoprotein]. The enzyme catalyses hexacosanoyl-CoA + oxidized [electron-transfer flavoprotein] + H(+) = (2E)-hexacosenoyl-CoA + reduced [electron-transfer flavoprotein]. It carries out the reaction tricosanoyl-CoA + oxidized [electron-transfer flavoprotein] + H(+) = (2E)-tricosenoyl-CoA + reduced [electron-transfer flavoprotein]. The protein operates within lipid metabolism; fatty acid beta-oxidation. Acyl-CoA dehydrogenase, that exhibits maximal activity towards saturated C22-CoA. Probably participates in beta-oxydation and energy production but could also play a role in the metabolism of specific fatty acids to control fatty acids composition of cellular lipids in brain. The protein is Acyl-CoA dehydrogenase family member 11 (Acad11) of Rattus norvegicus (Rat).